Consider the following 311-residue polypeptide: p-hydroxybenzoic acid efflux pump subunit AaeA (311 aa).

A helical transmembrane segment spans residues 11–31; it reads IGITLLVVLLAVIAIFKVWAF.

The protein belongs to the membrane fusion protein (MFP) (TC 8.A.1) family.

The protein localises to the cell inner membrane. Forms an efflux pump with AaeB. In Yersinia enterocolitica serotype O:8 / biotype 1B (strain NCTC 13174 / 8081), this protein is p-hydroxybenzoic acid efflux pump subunit AaeA.